Here is a 202-residue protein sequence, read N- to C-terminus: Oocyte-secreted protein 1 (202 aa).

An N-terminal signal peptide occupies residues 1–21 (MKPFVGLLGLLLLLSFMKTCA). Residues 157 to 183 (QPNLSTSSEDHHVSTEPWASETSRSEA) form a disordered region.

The protein belongs to the PLAC1 family. In terms of tissue distribution, expressed in oocytes in primary through antral-stage follicles. Expressed in liver and ovary.

Its subcellular location is the secreted. May be involved in cell differentiation. This Mus musculus (Mouse) protein is Oocyte-secreted protein 1 (Oosp1).